Consider the following 213-residue polypeptide: Thymidylate kinase (213 aa).

10-17 (GLEGAGKT) contributes to the ATP binding site.

It belongs to the thymidylate kinase family.

The enzyme catalyses dTMP + ATP = dTDP + ADP. Phosphorylation of dTMP to form dTDP in both de novo and salvage pathways of dTTP synthesis. The protein is Thymidylate kinase of Escherichia fergusonii (strain ATCC 35469 / DSM 13698 / CCUG 18766 / IAM 14443 / JCM 21226 / LMG 7866 / NBRC 102419 / NCTC 12128 / CDC 0568-73).